The following is a 96-amino-acid chain: Small ribosomal subunit protein bS6 (96 aa).

The protein belongs to the bacterial ribosomal protein bS6 family.

Binds together with bS18 to 16S ribosomal RNA. The chain is Small ribosomal subunit protein bS6 from Corynebacterium aurimucosum (strain ATCC 700975 / DSM 44827 / CIP 107346 / CN-1) (Corynebacterium nigricans).